The primary structure comprises 332 residues: Beta-ketoacyl-[acyl-carrier-protein] synthase III 5 (332 aa).

Residues Cys-111 and His-253 contribute to the active site. The ACP-binding stretch occupies residues 254–258 (QANAR). Residue Asn-283 is part of the active site.

This sequence belongs to the thiolase-like superfamily. FabH family. In terms of assembly, homodimer.

The protein localises to the cytoplasm. It catalyses the reaction malonyl-[ACP] + acetyl-CoA + H(+) = 3-oxobutanoyl-[ACP] + CO2 + CoA. It participates in lipid metabolism; fatty acid biosynthesis. Functionally, catalyzes the condensation reaction of fatty acid synthesis by the addition to an acyl acceptor of two carbons from malonyl-ACP. Catalyzes the first condensation reaction which initiates fatty acid synthesis and may therefore play a role in governing the total rate of fatty acid production. Possesses both acetoacetyl-ACP synthase and acetyl transacylase activities. Its substrate specificity determines the biosynthesis of branched-chain and/or straight-chain of fatty acids. In Streptomyces coelicolor (strain ATCC BAA-471 / A3(2) / M145), this protein is Beta-ketoacyl-[acyl-carrier-protein] synthase III 5.